We begin with the raw amino-acid sequence, 309 residues long: Elongation factor Ts (309 aa).

An involved in Mg(2+) ion dislocation from EF-Tu region spans residues 82-85 (TDFV).

It belongs to the EF-Ts family.

It localises to the cytoplasm. Associates with the EF-Tu.GDP complex and induces the exchange of GDP to GTP. It remains bound to the aminoacyl-tRNA.EF-Tu.GTP complex up to the GTP hydrolysis stage on the ribosome. The protein is Elongation factor Ts (tsf) of Rickettsia prowazekii (strain Madrid E).